A 338-amino-acid polypeptide reads, in one-letter code: Ketol-acid reductoisomerase (NADP(+)) (338 aa).

The region spanning 1 to 181 (MKVFYDKDCD…GGGRAGIIET (181 aa)) is the KARI N-terminal Rossmann domain. Residues 24-27 (YGSQ), arginine 47, and serine 52 each bind NADP(+). Histidine 107 is an active-site residue. Glycine 133 is a binding site for NADP(+). A KARI C-terminal knotted domain is found at 182–327 (NFREETETDL…AKLRAMMPWI (146 aa)). 4 residues coordinate Mg(2+): aspartate 190, glutamate 194, glutamate 226, and glutamate 230. Serine 251 contributes to the substrate binding site.

Belongs to the ketol-acid reductoisomerase family. Mg(2+) is required as a cofactor.

It carries out the reaction (2R)-2,3-dihydroxy-3-methylbutanoate + NADP(+) = (2S)-2-acetolactate + NADPH + H(+). The enzyme catalyses (2R,3R)-2,3-dihydroxy-3-methylpentanoate + NADP(+) = (S)-2-ethyl-2-hydroxy-3-oxobutanoate + NADPH + H(+). It participates in amino-acid biosynthesis; L-isoleucine biosynthesis; L-isoleucine from 2-oxobutanoate: step 2/4. The protein operates within amino-acid biosynthesis; L-valine biosynthesis; L-valine from pyruvate: step 2/4. In terms of biological role, involved in the biosynthesis of branched-chain amino acids (BCAA). Catalyzes an alkyl-migration followed by a ketol-acid reduction of (S)-2-acetolactate (S2AL) to yield (R)-2,3-dihydroxy-isovalerate. In the isomerase reaction, S2AL is rearranged via a Mg-dependent methyl migration to produce 3-hydroxy-3-methyl-2-ketobutyrate (HMKB). In the reductase reaction, this 2-ketoacid undergoes a metal-dependent reduction by NADPH to yield (R)-2,3-dihydroxy-isovalerate. This Janthinobacterium sp. (strain Marseille) (Minibacterium massiliensis) protein is Ketol-acid reductoisomerase (NADP(+)).